A 420-amino-acid polypeptide reads, in one-letter code: Gamma-glutamyl phosphate reductase (420 aa).

The protein belongs to the gamma-glutamyl phosphate reductase family.

It localises to the cytoplasm. It catalyses the reaction L-glutamate 5-semialdehyde + phosphate + NADP(+) = L-glutamyl 5-phosphate + NADPH + H(+). The protein operates within amino-acid biosynthesis; L-proline biosynthesis; L-glutamate 5-semialdehyde from L-glutamate: step 2/2. Functionally, catalyzes the NADPH-dependent reduction of L-glutamate 5-phosphate into L-glutamate 5-semialdehyde and phosphate. The product spontaneously undergoes cyclization to form 1-pyrroline-5-carboxylate. The chain is Gamma-glutamyl phosphate reductase from Cereibacter sphaeroides (strain ATCC 17029 / ATH 2.4.9) (Rhodobacter sphaeroides).